Consider the following 438-residue polypeptide: Shikimate transporter (438 aa).

12 helical membrane-spanning segments follow: residues 28–48 (FAGA…AALV), 64–84 (LAAF…GVIF), 109–129 (ALIG…ILLV), 133–153 (AIQG…SVES), 168–188 (VGYG…SMMT), 193–213 (FLSW…LGAL), 255–275 (IIAL…FALN), 287–307 (LFLN…PCFA), 318–337 (VYIT…FMAL), 341–363 (SIFW…VVCV), 387–407 (VASV…ITYF), and 411–431 (WHSV…TALL).

It belongs to the major facilitator superfamily. Metabolite:H+ Symporter (MHS) family (TC 2.A.1.6) family.

Its subcellular location is the cell inner membrane. It catalyses the reaction shikimate(in) + H(+)(in) = shikimate(out) + H(+)(out). Involved in the uptake of shikimate, an intermediate in the aromatic amino acid biosynthetic pathway. In Escherichia coli (strain K12), this protein is Shikimate transporter.